A 157-amino-acid polypeptide reads, in one-letter code: uncharacterized protein (157 aa).

An N-terminal signal peptide occupies residues 1–19 (MRKYLIILVLLLFLSSSFG).

This is an uncharacterized protein from Methanocaldococcus jannaschii (strain ATCC 43067 / DSM 2661 / JAL-1 / JCM 10045 / NBRC 100440) (Methanococcus jannaschii).